The sequence spans 304 residues: Type II methyltransferase M.HindV (304 aa).

Positions 1–299 (MKCVDLFSGC…SAIINFEKEP (299 aa)) constitute an SAM-dependent MTase C5-type domain. C75 is an active-site residue.

The protein belongs to the class I-like SAM-binding methyltransferase superfamily. C5-methyltransferase family.

The enzyme catalyses a 2'-deoxycytidine in DNA + S-adenosyl-L-methionine = a 5-methyl-2'-deoxycytidine in DNA + S-adenosyl-L-homocysteine + H(+). In terms of biological role, a methylase, recognizes the double-stranded sequence 5'-GRCGYC-3', methylates C-? on both strands, and protects the DNA from cleavage by the HindV endonuclease. The protein is Type II methyltransferase M.HindV (hindVM) of Haemophilus influenzae (strain ATCC 51907 / DSM 11121 / KW20 / Rd).